Reading from the N-terminus, the 221-residue chain is GTP cyclohydrolase 1 (221 aa).

Cys111, His114, and Cys182 together coordinate Zn(2+).

This sequence belongs to the GTP cyclohydrolase I family. Homomer.

It carries out the reaction GTP + H2O = 7,8-dihydroneopterin 3'-triphosphate + formate + H(+). It participates in cofactor biosynthesis; 7,8-dihydroneopterin triphosphate biosynthesis; 7,8-dihydroneopterin triphosphate from GTP: step 1/1. This Erwinia tasmaniensis (strain DSM 17950 / CFBP 7177 / CIP 109463 / NCPPB 4357 / Et1/99) protein is GTP cyclohydrolase 1.